Consider the following 961-residue polypeptide: DNA replication licensing factor MCM2 (961 aa).

The span at 1–17 shows a compositional bias: polar residues; the sequence is MDDSENNAPSTPGSPGF. Disordered regions lie at residues 1–81 and 120–220; these read MDDS…FNDN and AEAE…EEDE. The span at 39 to 78 shows a compositional bias: acidic residues; the sequence is SDDDDDDVVGAEEAEVDPNVLPEDDGVVAAEEEEDGEDLF. 2 stretches are compositionally biased toward basic and acidic residues: residues 120 to 146 and 166 to 176; these read AEAE…LHDQ and PPREPRTPRSD. A compositionally biased stretch (acidic residues) spans 205–220; that stretch reads QTDDDPYEDEFDEEDE. The segment at 380 to 406 adopts a C4-type zinc-finger fold; the sequence is CSKCGTVLGPFFQNSYTEVKVGSCPEC. The MCM domain maps to 524-730; the sequence is IGERIVKSIA…FTDEMLARFV (207 aa). 574 to 581 provides a ligand contact to ATP; the sequence is GDPGTAKS. The Arginine finger signature appears at 706–709; that stretch reads SRFD.

Belongs to the MCM family. Component of the minichromosome maintenance (MCM) complex, a heterotetramer composed of MCM2, MCM3, MCM4, MCM5, MCM6 and MCM7.

The protein resides in the nucleus. It carries out the reaction ATP + H2O = ADP + phosphate + H(+). Probable component of the MCM2-7 complex (MCM complex) that may function as a DNA helicase and which is essential to undergo a single round of replication initiation and elongation per cell cycle in eukaryotic cells. The polypeptide is DNA replication licensing factor MCM2 (Oryza sativa subsp. indica (Rice)).